Reading from the N-terminus, the 209-residue chain is Uracil phosphoribosyltransferase (209 aa).

5-phospho-alpha-D-ribose 1-diphosphate-binding positions include arginine 79, arginine 104, and 131 to 139 (DPMLATGGS). Uracil-binding positions include isoleucine 194 and 199–201 (GDA). Residue aspartate 200 participates in 5-phospho-alpha-D-ribose 1-diphosphate binding.

It belongs to the UPRTase family. The cofactor is Mg(2+).

It catalyses the reaction UMP + diphosphate = 5-phospho-alpha-D-ribose 1-diphosphate + uracil. The protein operates within pyrimidine metabolism; UMP biosynthesis via salvage pathway; UMP from uracil: step 1/1. Allosterically activated by GTP. In terms of biological role, catalyzes the conversion of uracil and 5-phospho-alpha-D-ribose 1-diphosphate (PRPP) to UMP and diphosphate. The polypeptide is Uracil phosphoribosyltransferase (Geobacter sulfurreducens (strain ATCC 51573 / DSM 12127 / PCA)).